The sequence spans 520 residues: GMP synthase [glutamine-hydrolyzing] (520 aa).

Positions 9–202 constitute a Glutamine amidotransferase type-1 domain; sequence SVLIVDFGSQ…IHNIAGIKGD (194 aa). Residue cysteine 86 is the Nucleophile of the active site. Catalysis depends on residues histidine 176 and glutamate 178. The region spanning 203–395 is the GMPS ATP-PPase domain; sequence WSMSAYRQKA…LGLPDSFIGR (193 aa). 230-236 contacts ATP; it reads SGGVDSS.

Homodimer.

It catalyses the reaction XMP + L-glutamine + ATP + H2O = GMP + L-glutamate + AMP + diphosphate + 2 H(+). It participates in purine metabolism; GMP biosynthesis; GMP from XMP (L-Gln route): step 1/1. In terms of biological role, catalyzes the synthesis of GMP from XMP. This chain is GMP synthase [glutamine-hydrolyzing], found in Rhizobium johnstonii (strain DSM 114642 / LMG 32736 / 3841) (Rhizobium leguminosarum bv. viciae).